The following is a 241-amino-acid chain: Glucosamine-6-phosphate deaminase (241 aa).

Asp67 serves as the catalytic Proton acceptor; for enolization step. Residue Asn136 is the For ring-opening step of the active site. The active-site Proton acceptor; for ring-opening step is the His138. Glu143 serves as the catalytic For ring-opening step.

The protein belongs to the glucosamine/galactosamine-6-phosphate isomerase family. NagB subfamily.

The catalysed reaction is alpha-D-glucosamine 6-phosphate + H2O = beta-D-fructose 6-phosphate + NH4(+). Its pathway is amino-sugar metabolism; N-acetylneuraminate degradation; D-fructose 6-phosphate from N-acetylneuraminate: step 5/5. Its function is as follows. Catalyzes the reversible isomerization-deamination of glucosamine 6-phosphate (GlcN6P) to form fructose 6-phosphate (Fru6P) and ammonium ion. The polypeptide is Glucosamine-6-phosphate deaminase (Bacillus velezensis (strain DSM 23117 / BGSC 10A6 / LMG 26770 / FZB42) (Bacillus amyloliquefaciens subsp. plantarum)).